A 449-amino-acid polypeptide reads, in one-letter code: Methionine aminopeptidase 2-2 (449 aa).

A disordered region spans residues 1–91 (MAAQAAPELA…PRIPLTTLFP (91 aa)). A compositionally biased stretch (polar residues) spans 15–28 (NKNTGSAEASTVPA). A compositionally biased stretch (acidic residues) spans 34 to 50 (DDAENEGDSDDDRDDEQ). Residues 61–75 (KKKKKKRPKKKKKTA) show a composition bias toward basic residues. Substrate is bound at residue His-199. A divalent metal cation contacts are provided by Asp-219, Asp-230, and His-299. Residue His-307 participates in substrate binding. The a divalent metal cation site is built by Glu-335 and Glu-430.

Belongs to the peptidase M24A family. Methionine aminopeptidase eukaryotic type 2 subfamily. Requires Co(2+) as cofactor. The cofactor is Zn(2+). Mn(2+) is required as a cofactor. Fe(2+) serves as cofactor.

It is found in the cytoplasm. It catalyses the reaction Release of N-terminal amino acids, preferentially methionine, from peptides and arylamides.. Its function is as follows. Cotranslationally removes the N-terminal methionine from nascent proteins. The N-terminal methionine is often cleaved when the second residue in the primary sequence is small and uncharged (Met-Ala-, Cys, Gly, Pro, Ser, Thr, or Val). The chain is Methionine aminopeptidase 2-2 from Arthroderma gypseum (strain ATCC MYA-4604 / CBS 118893) (Microsporum gypseum).